The following is a 628-amino-acid chain: Set1/Ash2 histone methyltransferase complex subunit ASH2 (628 aa).

M1 carries the N-acetylmethionine modification. A compositionally biased stretch (gly residues) spans 1 to 18; it reads MAAAGAGPGQEAGAGPGP. The PHD-type; atypical zinc finger occupies 1 to 66; sequence MAAAGAGPGQ…SGEAEGGEAN (66 aa). A disordered region spans residues 1–107; sequence MAAAGAGPGQ…QAGSVDEENG (107 aa). The span at 36 to 65 shows a compositional bias: low complexity; it reads AAGAAAPPGEGISAAPTVEPSSGEAEGGEA. Residues 67 to 177 form a DNA-binding region; it reads LVDVSGGLET…MCLSALANLT (111 aa). The residue at position 101 (S101) is a Phosphoserine. The C4-type zinc-finger motif lies at 117–150; sequence CGICTKWFTADTFGIDTSSCLPFMTNYSFHCNVC. Over residues 235 to 252 the composition is skewed to basic and acidic residues; that stretch reads LVKEHPDPGSKDPEEDYP. The interval 235-331 is disordered; sequence LVKEHPDPGS…AQRLPPHGYP (97 aa). Residues 270-282 are compositionally biased toward polar residues; the sequence is NQKQSSAVSTSGN. Residues 283–295 are compositionally biased toward gly residues; the sequence is LNGGIAAGSSGKG. R296 carries the post-translational modification Asymmetric dimethylarginine; by PRMT1 and PRMT5. At S316 the chain carries Phosphoserine. Residues 316 to 628 form an interaction with RBBP5 region; that stretch reads SDPLFSAQRL…DGRRSPPWEP (313 aa). In terms of domain architecture, B30.2/SPRY spans 360–583; sequence LDCWAGKPIP…VSINFGPCFK (224 aa).

As to quaternary structure, interacts with HCFC1. Core component of several methyltransferase-containing complexes including MLL1/MLL, MLL2/3 (also named ASCOM complex) and MLL4/WBP7. Each complex is at least composed of ASH2L, RBBP5, WDR5, DPY30, one or more specific histone methyltransferases (KMT2A/MLL1, KMT2D/MLL2, KMT2C/MLL3 and KMT2B/MLL4), and the facultative components PAGR1, BACC1, CHD8, E2F6, HCFC1, HCFC2, HSP70, INO80C, KDM6A, KANSL1, LAS1L, MAX, MCRS1, MEN1, MGA, KAT8/MOF, NCOA6, PAXIP1/PTIP, PELP1, PHF20, PRP31, RING2, RUVB1/TIP49A, RUVB2/TIP49B, SENP3, TAF1, TAF4, TAF6, TAF7, TAF9, TEX10 and alpha- and beta-tubulin. Component of the SET1 complex, at least composed of the catalytic subunit (SETD1A or SETD1B), WDR5, WDR82, RBBP5, ASH2L/ASH2, CXXC1/CFP1, HCFC1 and DPY30. Found in a complex with RBBP5, ASH2L, DPY30, KMT2A, KMT2D and WDR5. Component of a histone methylation complex composed of at least ZNF335, RBBP5, ASH2L and WDR5; the complex may have histone H3-specific methyltransferase activity, however does not have specificity for 'Lys-4' of histone H3. Within the complex, interacts with ZNF335. Interacts with RBBP5. Components of this complex may associate with components of a nuclear receptor-mediated transcription complex to form a complex at least composed of ZNF335, HCFC1, CCAR2, EMSY, MKI67, RBBP5, ASH2L and WDR5. Within this complex also interacts with CCAR2 and EMSY. Interacts with DPY30. Interacts with SETD1A and SETD1B. Both monomethylated and dimethylated on arginine residues in the C-terminus. Arg-296 is the major site. Methylation is not required for nuclear localization, nor for MLL complex integrity or maintenance of global histone H3K4me3 levels. As to expression, ubiquitously expressed. Predominantly expressed in adult heart and testis and fetal lung and liver, with barely detectable expression in adult lung, liver, kidney, prostate, and peripheral leukocytes.

The protein resides in the nucleus. Its function is as follows. Transcriptional regulator. Component or associated component of some histone methyltransferase complexes which regulates transcription through recruitment of those complexes to gene promoters. Component of the Set1/Ash2 histone methyltransferase (HMT) complex, a complex that specifically methylates 'Lys-4' of histone H3, but not if the neighboring 'Lys-9' residue is already methylated. As part of the MLL1/MLL complex it is involved in methylation and dimethylation at 'Lys-4' of histone H3. May play a role in hematopoiesis. In association with RBBP5 and WDR5, stimulates the histone methyltransferase activities of KMT2A, KMT2B, KMT2C, KMT2D, SETD1A and SETD1B. This Homo sapiens (Human) protein is Set1/Ash2 histone methyltransferase complex subunit ASH2 (ASH2L).